The sequence spans 326 residues: Isopenicillin N synthase (326 aa).

Isopenicillin N contacts are provided by arginine 84, tyrosine 88, and tyrosine 186. N-[(5S)-5-amino-5-carboxypentanoyl]-L-cysteinyl-D-valine is bound by residues arginine 84, tyrosine 88, tyrosine 186, histidine 209, and aspartate 211. Residues 183–283 (LIRYPFLENY…RLSIPFFANL (101 aa)) form the Fe2OG dioxygenase domain. Histidine 209, aspartate 211, and histidine 265 together coordinate Fe(2+). Arginine 274 is a 2-oxoglutarate binding site. Isopenicillin N is bound at residue serine 276. Residue serine 276 coordinates N-[(5S)-5-amino-5-carboxypentanoyl]-L-cysteinyl-D-valine.

It belongs to the iron/ascorbate-dependent oxidoreductase family. Requires Fe cation as cofactor. It depends on L-ascorbate as a cofactor.

The enzyme catalyses N-[(5S)-5-amino-5-carboxypentanoyl]-L-cysteinyl-D-valine + O2 = isopenicillin N + 2 H2O. It participates in antibiotic biosynthesis; penicillin G biosynthesis; penicillin G from L-alpha-aminoadipate and L-cysteine and L-valine: step 2/3. Removes, in the presence of oxygen, 4 hydrogen atoms from delta-L-(alpha-aminoadipyl)-L-cysteinyl-D-valine (ACV) to form the azetidinone and thiazolidine rings of isopenicillin. The chain is Isopenicillin N synthase (pcbC) from Flavobacterium sp. (strain SC 12,154).